The following is a 473-amino-acid chain: Probable aspartokinase (473 aa).

2 consecutive ACT domains span residues 323–392 (IFGA…FLNN) and 409–473 (VVGA…KTNS).

The protein belongs to the aspartokinase family.

The catalysed reaction is L-aspartate + ATP = 4-phospho-L-aspartate + ADP. It functions in the pathway amino-acid biosynthesis; L-lysine biosynthesis via DAP pathway; (S)-tetrahydrodipicolinate from L-aspartate: step 1/4. Its pathway is amino-acid biosynthesis; L-methionine biosynthesis via de novo pathway; L-homoserine from L-aspartate: step 1/3. It participates in amino-acid biosynthesis; L-threonine biosynthesis; L-threonine from L-aspartate: step 1/5. In Methanocaldococcus jannaschii (strain ATCC 43067 / DSM 2661 / JAL-1 / JCM 10045 / NBRC 100440) (Methanococcus jannaschii), this protein is Probable aspartokinase.